Here is a 715-residue protein sequence, read N- to C-terminus: Polyribonucleotide nucleotidyltransferase (715 aa).

Residues Asp500 and Asp506 each contribute to the Mg(2+) site. Residues 567 to 634 (PKVKMIRINP…AYIESLVREA (68 aa)) form the KH domain. The 76-residue stretch at 637-712 (GELYEAKVTR…ERGRVDLSRK (76 aa)) folds into the S1 motif domain.

Belongs to the polyribonucleotide nucleotidyltransferase family. Mg(2+) serves as cofactor.

Its subcellular location is the cytoplasm. It carries out the reaction RNA(n+1) + phosphate = RNA(n) + a ribonucleoside 5'-diphosphate. Involved in mRNA degradation. Catalyzes the phosphorolysis of single-stranded polyribonucleotides processively in the 3'- to 5'-direction. This chain is Polyribonucleotide nucleotidyltransferase, found in Acholeplasma laidlawii (strain PG-8A).